The primary structure comprises 301 residues: MDPQQIKAALGSGLLSFPVTPFDAENRFAAAPYQKHVEWLSGFDAPVLFAAGGTGEFFSLTPDEIPAIVKAAKESAGKTAIVSGCGYGTEIARGIARSVEAAGGDGILLLPHYLIDAPQEGLYAHVRAVCQATGMGVMVYNRDNAVLQADTLARLCDDCPNLVGFKDGTGDIGLVRQITAKMGDRLTYLGGMPTAELFAEAYLGASFTTYSSAVFNFVPALANKFYAALRAGDRATCESILNSFFYPFMELRSRRKGYAVAAVKAGVRLVGFDAGPVRAPLSDLTGEEEEILKALIDAHRE.

Belongs to the DapA family.

It catalyses the reaction 5-dehydro-4-deoxy-D-glucarate + H(+) = 2,5-dioxopentanoate + CO2 + H2O. Its pathway is carbohydrate acid metabolism; D-glucarate degradation; 2,5-dioxopentanoate from D-glucarate: step 2/2. The chain is Probable 5-dehydro-4-deoxyglucarate dehydratase from Cereibacter sphaeroides (strain ATCC 17023 / DSM 158 / JCM 6121 / CCUG 31486 / LMG 2827 / NBRC 12203 / NCIMB 8253 / ATH 2.4.1.) (Rhodobacter sphaeroides).